The chain runs to 110 residues: UPF0060 membrane protein Rpal_4363 (110 aa).

4 helical membrane-spanning segments follow: residues 4 to 24, 31 to 51, 59 to 79, and 88 to 108; these read LLTFCAAALMEITGCFAFWAW, PLWLIPGMLALALFAYLLTLA, AYAAYGGIYIASALLWGWAIE, and VIGAAICLVGMSVILFGPRAL.

Belongs to the UPF0060 family.

It is found in the cell inner membrane. In Rhodopseudomonas palustris (strain TIE-1), this protein is UPF0060 membrane protein Rpal_4363.